The primary structure comprises 366 residues: 3-isopropylmalate dehydrogenase (366 aa).

Gly76–Glu89 contacts NAD(+). Substrate contacts are provided by Arg96, Arg106, Arg134, and Asp219. Mg(2+) is bound by residues Asp219, Asp243, and Asp247. Gly277–Asn289 provides a ligand contact to NAD(+).

The protein belongs to the isocitrate and isopropylmalate dehydrogenases family. LeuB type 1 subfamily. In terms of assembly, homodimer. Mg(2+) is required as a cofactor. Mn(2+) serves as cofactor.

The protein resides in the cytoplasm. The catalysed reaction is (2R,3S)-3-isopropylmalate + NAD(+) = 4-methyl-2-oxopentanoate + CO2 + NADH. It functions in the pathway amino-acid biosynthesis; L-leucine biosynthesis; L-leucine from 3-methyl-2-oxobutanoate: step 3/4. Catalyzes the oxidation of 3-carboxy-2-hydroxy-4-methylpentanoate (3-isopropylmalate) to 3-carboxy-4-methyl-2-oxopentanoate. The product decarboxylates to 4-methyl-2 oxopentanoate. The protein is 3-isopropylmalate dehydrogenase of Oceanobacillus iheyensis (strain DSM 14371 / CIP 107618 / JCM 11309 / KCTC 3954 / HTE831).